The primary structure comprises 725 residues: Peroxisomal fatty acid beta-oxidation multifunctional protein MFP2 (725 aa).

Residue Glu119 is the Nucleophile of the active site. Glu139 (proton acceptor) is an active-site residue. A Microbody targeting signal motif is present at residues 723-725; it reads SRL.

This sequence in the N-terminal section; belongs to the enoyl-CoA hydratase/isomerase family. The protein in the central section; belongs to the 3-hydroxyacyl-CoA dehydrogenase family. In terms of tissue distribution, highly expressed in senescing leaves and at lower levels in flowers and siliques.

The protein resides in the glyoxysome. The protein localises to the peroxisome. It catalyses the reaction a (3S)-3-hydroxyacyl-CoA = a (2E)-enoyl-CoA + H2O. The enzyme catalyses a 4-saturated-(3S)-3-hydroxyacyl-CoA = a (3E)-enoyl-CoA + H2O. The catalysed reaction is (3S)-3-hydroxybutanoyl-CoA = (2E)-butenoyl-CoA + H2O. It carries out the reaction (3S)-hydroxyoctanoyl-CoA = (2E)-octenoyl-CoA + H2O. It catalyses the reaction (3S)-3-hydroxydodecanoyl-CoA = (2E)-dodecenoyl-CoA + H2O. The enzyme catalyses (3S)-hydroxytetradecanoyl-CoA = (2E)-tetradecenoyl-CoA + H2O. The catalysed reaction is (3S)-hydroxyhexanoyl-CoA = (2E)-hexenoyl-CoA + H2O. It carries out the reaction a (3Z)-enoyl-CoA = a 4-saturated (2E)-enoyl-CoA. It catalyses the reaction a (3E)-enoyl-CoA = a 4-saturated (2E)-enoyl-CoA. The enzyme catalyses (3S)-3-hydroxybutanoyl-CoA = (3R)-3-hydroxybutanoyl-CoA. The catalysed reaction is a (3S)-3-hydroxyacyl-CoA + NAD(+) = a 3-oxoacyl-CoA + NADH + H(+). It carries out the reaction (3S)-3-hydroxybutanoyl-CoA + NAD(+) = acetoacetyl-CoA + NADH + H(+). It catalyses the reaction (3S)-hydroxyhexanoyl-CoA + NAD(+) = 3-oxohexanoyl-CoA + NADH + H(+). The enzyme catalyses (3S)-hydroxyoctanoyl-CoA + NAD(+) = 3-oxooctanoyl-CoA + NADH + H(+). The catalysed reaction is (3S)-3-hydroxydodecanoyl-CoA + NAD(+) = 3-oxododecanoyl-CoA + NADH + H(+). It carries out the reaction (3S)-hydroxytetradecanoyl-CoA + NAD(+) = 3-oxotetradecanoyl-CoA + NADH + H(+). The protein operates within lipid metabolism; fatty acid beta-oxidation. Functionally, involved in peroxisomal fatty acid beta-oxidation during seed germination. Possesses enoyl-CoA hydratase activity against long chain substrates (C14-C18) and 3-hydroxyacyl-CoA dehydrogenase activity against chains of variable sizes (C6-C18). Possesses 3-hydroxy-3-phenylpropionyl-CoA dehydrogenase activity and is involved in the peroxisomal beta-oxidation pathway for the biosynthesis of benzoic acid (BA). Required for the accumulation in seeds of substituted hydroxybenzoylated choline esters, which are BA-containing secondary metabolites. Fatty acid beta-oxidation pathway in peroxisomes regulates gene silencing, histone acetylation and DNA methylation. The protein is Peroxisomal fatty acid beta-oxidation multifunctional protein MFP2 of Arabidopsis thaliana (Mouse-ear cress).